A 315-amino-acid polypeptide reads, in one-letter code: Probable cytochrome c oxidase subunit 2 (315 aa).

Helical transmembrane passes span 54-74 (IALICFLIVSCNCFASEPLPW), 96-116 (LLYISTAIVLFVAGLLGFVCI), and 133-153 (VLIEIIWTVIPIIILVIIAVP). The Cu cation site is built by H235, C270, C274, and H278.

Belongs to the cytochrome c oxidase subunit 2 family. Cu cation serves as cofactor. The cofactor is heme.

It localises to the cell membrane. The catalysed reaction is 4 Fe(II)-[cytochrome c] + O2 + 8 H(+)(in) = 4 Fe(III)-[cytochrome c] + 2 H2O + 4 H(+)(out). Its function is as follows. Subunits I and II form the functional core of the enzyme complex. Electrons originating in cytochrome c are transferred via heme a and Cu(A) to the binuclear center formed by heme a3 and Cu(B). In Rickettsia conorii (strain ATCC VR-613 / Malish 7), this protein is Probable cytochrome c oxidase subunit 2 (ctaC).